The primary structure comprises 558 residues: Atlastin-1 (558 aa).

Residues 1 to 27 (MAKNRRDRNSWGGFSEKTYEWSSEEEE) form a disordered region. Positions 1–34 (MAKNRRDRNSWGGFSEKTYEWSSEEEEPVKKAGP) are N-terminal hypervariable region (HVR). Topologically, residues 1 to 449 (MAKNRRDRNS…NIFHAARTPA (449 aa)) are cytoplasmic. 3 positions are modified to phosphoserine: serine 10, serine 22, and serine 23. The GB1/RHD3-type G domain maps to 64–309 (DKEVVAVSVA…LIPWLLSPES (246 aa)). Arginine 77, lysine 78, glycine 79, lysine 80, serine 81, phenylalanine 82, glutamine 148, arginine 217, aspartate 218, valine 276, and asparagine 279 together coordinate GDP. GTP-binding residues include arginine 77, lysine 78, glycine 79, lysine 80, serine 81, and phenylalanine 82. Serine 81 provides a ligand contact to Mg(2+). The GTP site is built by arginine 217, aspartate 218, and valine 276. A 3HB (three-helix bundle) domain region spans residues 347–438 (MLQATAEANN…YIQYIKHNDS (92 aa)). Lysine 395 carries the post-translational modification N6-acetyllysine. A coiled-coil region spans residues 412–439 (EFSRRYLQQLESEIDELYIQYIKHNDSK). The tract at residues 439–447 (KNIFHAART) is linker. The helical transmembrane segment at 450 to 470 (TLFVVIFITYVIAGVTGFIGL) threads the bilayer. Residue aspartate 471 is a topological domain, lumenal. Residues 472 to 492 (IIASLCNMIMGLTLITLCTWA) form a helical membrane-spanning segment. Residues 493–558 (YIRYSGEYRE…STEQSEKKKM (66 aa)) are Cytoplasmic-facing. The tract at residues 521-558 (NEALYKLYSAAATHRHLYHQAFPTPKSESTEQSEKKKM) is autoinhibitory domain.

The protein belongs to the TRAFAC class dynamin-like GTPase superfamily. GB1/RHD3 GTPase family. GB1 subfamily. In terms of assembly, monomeric and homodimeric. The homodimer, transiently formed by two molecules on opposing membranes, is the active form mediating ER membrane fusion. Interacts with REEP1, REEP5, RTN3 and RTN4 (via the transmembrane region); these proteins are involved in endoplasmic reticulum tubular network organization. Interacts with ZFYVE27; both proteins are involved in endoplasmic reticulum tubular network organization. Interacts with ARL6IP1; both proteins are involved in endoplasmic reticulum tubular network organization. Interacts with SPAST; the interaction is direct, could recruit SPAST to Golgi membranes. Interacts (via N-terminal region) with MAP4K4 (via CNH regulatory domain). May interact with TMED2. Interacts with CPT1C. Phosphorylated. Phosphorylation, by different kinases, of the N-terminal hypervariable region (HVR) regulates the ATL1-mediated membrane tethering step.

Its subcellular location is the endoplasmic reticulum membrane. The protein resides in the golgi apparatus membrane. It is found in the cell projection. It localises to the axon. The enzyme catalyses GTP + H2O = GDP + phosphate + H(+). Its function is as follows. Atlastin-1 (ATL1) is a membrane-anchored GTPase that mediates the GTP-dependent fusion of endoplasmic reticulum (ER) membranes, maintaining the continuous ER network. It facilitates the formation of three-way junctions where ER tubules intersect. Two atlastin-1 on neighboring ER tubules bind GTP and form loose homodimers through the GB1/RHD3-type G domains and 3HB regions. Upon GTP hydrolysis, the 3HB regions tighten, pulling the membranes together to drive their fusion. After fusion, the homodimer disassembles upon release of inorganic phosphate (Pi). Subsequently, GDP dissociates, resetting the monomers to a conformation ready for a new fusion cycle. May also regulate more or less directly Golgi biogenesis. Indirectly regulates axonal development. In Pongo abelii (Sumatran orangutan), this protein is Atlastin-1.